The primary structure comprises 496 residues: Alanine aminotransferase 1 (496 aa).

N-acetylalanine is present on Ala-2. Residue Thr-22 is modified to Phosphothreonine. N6-(pyridoxal phosphate)lysine is present on Lys-314.

The protein belongs to the class-I pyridoxal-phosphate-dependent aminotransferase family. Alanine aminotransferase subfamily. In terms of assembly, homodimer. Requires pyridoxal 5'-phosphate as cofactor. As to expression, mainly expressed in liver, intestine, colon and white adipose tissue.

The protein localises to the cytoplasm. It catalyses the reaction L-alanine + 2-oxoglutarate = pyruvate + L-glutamate. Its pathway is amino-acid degradation; L-alanine degradation via transaminase pathway; pyruvate from L-alanine: step 1/1. Functionally, catalyzes the reversible transamination between alanine and 2-oxoglutarate to form pyruvate and glutamate. Participates in cellular nitrogen metabolism and also in liver gluconeogenesis starting with precursors transported from skeletal muscles. This Mus musculus (Mouse) protein is Alanine aminotransferase 1 (Gpt).